The following is a 663-amino-acid chain: Cyclic nucleotide-gated channel alpha-2 (663 aa).

The disordered stretch occupies residues 1–61 (MTEKANGVKS…QLAEMDAPQQ (61 aa)). The Cytoplasmic portion of the chain corresponds to 1 to 144 (MTEKANGVKS…PAGDWYYRWL (144 aa)). A compositionally biased stretch (low complexity) spans 12–23 (PANNHNHHAPPA). Residues 145-166 (FLIALPVLYNWCLLVARACFSD) form a helical membrane-spanning segment. Topologically, residues 167–176 (LQKGYYIVWL) are extracellular. A helical membrane pass occupies residues 177–197 (VLDYVSDVVYIADLFIRLRTG). Residues 198–222 (FLEQGLLVKDTKKLRDNYIHTMQFK) are Cytoplasmic-facing. The chain crosses the membrane as a helical span at residues 223–241 (LDVASIIPTDLIYFAVGIH). Topologically, residues 242-246 (NPEVR) are extracellular. A helical transmembrane segment spans residues 247-265 (FNRLLHFARMFEFFDRTET). Residues 266 to 272 (RTSYPNI) lie on the Cytoplasmic side of the membrane. The ion conduction pathway stretch occupies residues 270–378 (PNIFRISNLI…GNVGSMISNM (109 aa)). Residues 273 to 296 (FRISNLILYILIIIHWNACIYYAI) traverse the membrane as a helical segment. Residues 297–319 (SKSIGFGVDTWVYPNITDPEYGY) are Extracellular-facing. The next 2 membrane-spanning stretches (helical) occupy residues 320-354 (LSRE…LFVI) and 355-379 (FDFL…SNMN). The selectivity filter stretch occupies residues 337-340 (TIGE). A C-linker region spans residues 380-456 (ATRAEFQAKI…STLKKVRIFQ (77 aa)). The Cytoplasmic segment spans residues 380–663 (ATRAEFQAKI…NSPEPPAEKP (284 aa)). The segment at 460–580 (AGLLVELVLK…EERGREILMK (121 aa)) is cyclic nucleotide-binding domain. 3',5'-cyclic GMP is bound by residues Gly520, Ser523, Arg536, and Thr537. Residues Arg536 and Thr537 each coordinate 3',5'-cyclic AMP. Residues 597-651 (VQEKLEQLETNMDTLYTRFARLLAEYTGAQQKLKQRITVLETKMKQNNEDDSLSD) are a coiled coil. A disordered region spans residues 640 to 663 (MKQNNEDDSLSDGMNSPEPPAEKP).

The protein belongs to the cyclic nucleotide-gated cation channel (TC 1.A.1.5) family. CNGA2 subfamily. The olfactory cyclic nucleotide-gated channel is an heterotetramer composed of CNGA2, CNGA4 and CNGB1b subunits with 2:1:1 stoichiometry. As to expression, olfactory neurons.

It localises to the cell projection. Its subcellular location is the cilium membrane. It carries out the reaction Ca(2+)(in) = Ca(2+)(out). The enzyme catalyses Na(+)(in) = Na(+)(out). The catalysed reaction is K(+)(in) = K(+)(out). It catalyses the reaction NH4(+)(in) = NH4(+)(out). It carries out the reaction Rb(+)(in) = Rb(+)(out). The enzyme catalyses Li(+)(in) = Li(+)(out). The catalysed reaction is Cs(+)(in) = Cs(+)(out). Pore-forming subunit of the olfactory cyclic nucleotide-gated channel. Operates in the cilia of olfactory sensory neurons where chemical stimulation of the odorant is converted to an electrical signal. Mediates odorant-induced cAMP-dependent Ca(2+) influx triggering neuron depolarization. The rise of intracellular Ca(2+) levels potentiates the olfactory response by activating Ca(2+)-dependent Cl(-) channels, but it also serves as a negative feedback signal to desensitize the channel for rapid adaptation to odorants. Conducts cAMP- and cGMP-gated ion currents, with permeability for monovalent and divalent cations. This Bos taurus (Bovine) protein is Cyclic nucleotide-gated channel alpha-2.